The following is a 1574-amino-acid chain: Centrosomal protein of 170 kDa protein B (1574 aa).

The region spanning Ile23–Ile73 is the FHA domain. Disordered regions lie at residues Val121 to Gly258, Asp316 to Gln395, and Phe409 to Glu578. Composition is skewed to basic and acidic residues over residues Arg147–Ala157, Ser182–Asp197, and Leu325–Val344. At Ser360 the chain carries Phosphoserine. Residues Ala370–Glu382 are compositionally biased toward low complexity. Ser421 bears the Phosphoserine mark. Positions Pro430–Pro446 are enriched in basic and acidic residues. A compositionally biased stretch (polar residues) spans Ala452–Ser463. Over residues Leu465–Leu474 the composition is skewed to basic and acidic residues. Residues Gly475 to Phe488 are compositionally biased toward polar residues. Phosphoserine occurs at positions 478 and 490. Residues Glu518–Leu528 show a composition bias toward pro residues. Residue Ser534 is modified to Phosphoserine. Phosphothreonine is present on residues Thr540 and Thr541. 10 positions are modified to phosphoserine: Ser595, Ser617, Ser653, Ser709, Ser744, Ser746, Ser749, Ser751, Ser819, and Ser843. Disordered stretches follow at residues Pro637–Leu826, Arg839–Ser882, Ser924–Gly1300, Ala1333–Ala1358, Asn1377–Thr1407, and Asn1510–Ala1535. The span at Phe857–Pro867 shows a compositional bias: polar residues. Ser947 carries the phosphoserine modification. The segment covering Asp950 to Ser959 has biased composition (polar residues). A phosphoserine mark is found at Ser965 and Ser981. Residues Ala996–His1005 are compositionally biased toward basic and acidic residues. Over residues Arg1084 to Leu1102 the composition is skewed to polar residues. Phosphoserine is present on Ser1122. The segment covering Ala1134–Glu1146 has biased composition (low complexity). 2 positions are modified to phosphoserine: Ser1166 and Ser1186. Residues Ala1199 to Ala1213 are compositionally biased toward low complexity. Residues His1265 to Arg1282 show a composition bias toward polar residues. Residue Thr1289 is modified to Phosphothreonine. At Ser1341 the chain carries Phosphoserine. Polar residues-rich tracts occupy residues Pro1344 to Ala1358 and Ser1385 to Asn1396. The residue at position 1345 (Thr1345) is a Phosphothreonine. Ser1347 bears the Phosphoserine mark. 2 positions are modified to phosphoserine: Ser1530 and Ser1533.

The protein belongs to the CEP170 family.

Its subcellular location is the cytoplasm. It is found in the cytoskeleton. Functionally, plays a role in microtubule organization. This is Centrosomal protein of 170 kDa protein B (Cep170b) from Mus musculus (Mouse).